The primary structure comprises 262 residues: Octopine permease ATP-binding protein P (262 aa).

The ABC transporter domain maps to 9-254 (VQLKDIRKNF…PRTDRFRQFL (246 aa)). Position 41–48 (41–48 (GSSGSGKS)) interacts with ATP.

Belongs to the ABC transporter superfamily.

The protein resides in the cell inner membrane. Functionally, component of the octopine active transport system probably consisting of four subunits: Q, M, P and T. The polypeptide is Octopine permease ATP-binding protein P (occP) (Rhizobium radiobacter (Agrobacterium tumefaciens)).